We begin with the raw amino-acid sequence, 339 residues long: Ferrochelatase (339 aa).

Positions 202 and 283 each coordinate Fe cation.

This sequence belongs to the ferrochelatase family.

It localises to the cytoplasm. The catalysed reaction is heme b + 2 H(+) = protoporphyrin IX + Fe(2+). Its pathway is porphyrin-containing compound metabolism; protoheme biosynthesis; protoheme from protoporphyrin-IX: step 1/1. Catalyzes the ferrous insertion into protoporphyrin IX. This is Ferrochelatase from Psychrobacter arcticus (strain DSM 17307 / VKM B-2377 / 273-4).